Here is a 513-residue protein sequence, read N- to C-terminus: ATP synthase subunit alpha (513 aa).

Position 169-176 (169-176 (GDRQIGKT)) interacts with ATP.

Belongs to the ATPase alpha/beta chains family. As to quaternary structure, F-type ATPases have 2 components, CF(1) - the catalytic core - and CF(0) - the membrane proton channel. CF(1) has five subunits: alpha(3), beta(3), gamma(1), delta(1), epsilon(1). CF(0) has three main subunits: a(1), b(2) and c(9-12). The alpha and beta chains form an alternating ring which encloses part of the gamma chain. CF(1) is attached to CF(0) by a central stalk formed by the gamma and epsilon chains, while a peripheral stalk is formed by the delta and b chains.

It localises to the cell inner membrane. The catalysed reaction is ATP + H2O + 4 H(+)(in) = ADP + phosphate + 5 H(+)(out). Its function is as follows. Produces ATP from ADP in the presence of a proton gradient across the membrane. The alpha chain is a regulatory subunit. The sequence is that of ATP synthase subunit alpha from Shewanella halifaxensis (strain HAW-EB4).